Reading from the N-terminus, the 199-residue chain is Mediator of RNA polymerase II transcription subunit 29 (199 aa).

Positions 1–17 (MAAPQPQAAAVSSASGV) are enriched in low complexity. The segment at 1 to 47 (MAAPQPQAAAVSSASGVSGPGSAGGPGPQQQPQPTQLVGSAQSGLLQ) is disordered. An N-acetylalanine modification is found at Ala2. A compositionally biased stretch (gly residues) spans 18 to 27 (SGPGSAGGPG). The span at 28 to 47 (PQQQPQPTQLVGSAQSGLLQ) shows a compositional bias: low complexity.

Belongs to the Mediator complex subunit 29 family. Component of the Mediator complex, which is composed of MED1, MED4, MED6, MED7, MED8, MED9, MED10, MED11, MED12, MED13, MED13L, MED14, MED15, MED16, MED17, MED18, MED19, MED20, MED21, MED22, MED23, MED24, MED25, MED26, MED27, MED29, MED30, MED31, CCNC, CDK8 and CDC2L6/CDK11. The MED12, MED13, CCNC and CDK8 subunits form a distinct module termed the CDK8 module. Mediator containing the CDK8 module is less active than Mediator lacking this module in supporting transcriptional activation. Individual preparations of the Mediator complex lacking one or more distinct subunits have been variously termed ARC, CRSP, DRIP, PC2, SMCC and TRAP. Associates with the MED18/MED20 heteromer.

The protein resides in the nucleus. Its function is as follows. Component of the Mediator complex, a coactivator involved in the regulated transcription of nearly all RNA polymerase II-dependent genes. Mediator functions as a bridge to convey information from gene-specific regulatory proteins to the basal RNA polymerase II transcription machinery. Mediator is recruited to promoters by direct interactions with regulatory proteins and serves as a scaffold for the assembly of a functional preinitiation complex with RNA polymerase II and the general transcription factors. This is Mediator of RNA polymerase II transcription subunit 29 (Med29) from Mus musculus (Mouse).